Reading from the N-terminus, the 270-residue chain is Probable feruloyl esterase C (270 aa).

The N-terminal stretch at 1-21 (MIKSIILQAIMVLSTLTSVHG) is a signal peptide. Asn23 is a glycosylation site (N-linked (GlcNAc...) asparagine).

This sequence belongs to the faeC family.

The protein resides in the secreted. It catalyses the reaction feruloyl-polysaccharide + H2O = ferulate + polysaccharide.. Functionally, involved in degradation of plant cell walls. Hydrolyzes the feruloyl-arabinose ester bond in arabinoxylans, and the feruloyl-galactose ester bond in pectin. Active against paranitrophenyl-acetate, methyl ferulate and wheat arabinoxylan. The sequence is that of Probable feruloyl esterase C (faeC) from Aspergillus flavus (strain ATCC 200026 / FGSC A1120 / IAM 13836 / NRRL 3357 / JCM 12722 / SRRC 167).